The following is a 291-amino-acid chain: Nucleotide-binding protein lwe2422 (291 aa).

ATP is bound at residue Gly-13–Thr-20. Asp-63–Gly-66 serves as a coordination point for GTP.

This sequence belongs to the RapZ-like family.

Its function is as follows. Displays ATPase and GTPase activities. The sequence is that of Nucleotide-binding protein lwe2422 from Listeria welshimeri serovar 6b (strain ATCC 35897 / DSM 20650 / CCUG 15529 / CIP 8149 / NCTC 11857 / SLCC 5334 / V8).